The chain runs to 806 residues: Leucine--tRNA ligase (806 aa).

Residues proline 40–histidine 51 carry the 'HIGH' region motif. Residues lysine 576–serine 580 carry the 'KMSKS' region motif. Lysine 579 contacts ATP.

Belongs to the class-I aminoacyl-tRNA synthetase family.

Its subcellular location is the cytoplasm. It catalyses the reaction tRNA(Leu) + L-leucine + ATP = L-leucyl-tRNA(Leu) + AMP + diphosphate. The sequence is that of Leucine--tRNA ligase from Chlorobium phaeobacteroides (strain BS1).